We begin with the raw amino-acid sequence, 426 residues long: Glutamate-1-semialdehyde 2,1-aminomutase (426 aa).

Position 265 is an N6-(pyridoxal phosphate)lysine (lysine 265).

The protein belongs to the class-III pyridoxal-phosphate-dependent aminotransferase family. HemL subfamily. In terms of assembly, homodimer. It depends on pyridoxal 5'-phosphate as a cofactor.

Its subcellular location is the cytoplasm. It catalyses the reaction (S)-4-amino-5-oxopentanoate = 5-aminolevulinate. It functions in the pathway porphyrin-containing compound metabolism; protoporphyrin-IX biosynthesis; 5-aminolevulinate from L-glutamyl-tRNA(Glu): step 2/2. The protein is Glutamate-1-semialdehyde 2,1-aminomutase of Hahella chejuensis (strain KCTC 2396).